We begin with the raw amino-acid sequence, 105 residues long: Small ribosomal subunit protein uS10 (105 aa).

The protein belongs to the universal ribosomal protein uS10 family. Part of the 30S ribosomal subunit.

Involved in the binding of tRNA to the ribosomes. In Rickettsia akari (strain Hartford), this protein is Small ribosomal subunit protein uS10.